Here is a 361-residue protein sequence, read N- to C-terminus: 3-dehydroquinate synthase (361 aa).

Residues 72-77 (SGEKEK), 130-131 (TT), Lys142, and Lys151 each bind NAD(+). Zn(2+) is bound by residues Glu184, His247, and His264.

The protein belongs to the sugar phosphate cyclases superfamily. Dehydroquinate synthase family. The cofactor is Co(2+). Zn(2+) is required as a cofactor. It depends on NAD(+) as a cofactor.

The protein resides in the cytoplasm. It catalyses the reaction 7-phospho-2-dehydro-3-deoxy-D-arabino-heptonate = 3-dehydroquinate + phosphate. The protein operates within metabolic intermediate biosynthesis; chorismate biosynthesis; chorismate from D-erythrose 4-phosphate and phosphoenolpyruvate: step 2/7. Functionally, catalyzes the conversion of 3-deoxy-D-arabino-heptulosonate 7-phosphate (DAHP) to dehydroquinate (DHQ). In Bacillus cereus (strain AH820), this protein is 3-dehydroquinate synthase.